The chain runs to 113 residues: Sperm-associated antigen 11B (113 aa).

A signal peptide spans 1–26 (MIPRLLPFFASLLFAALLFPGLSNAS). Cystine bridges form between cysteine 80-cysteine 108, cysteine 87-cysteine 101, and cysteine 91-cysteine 109.

Belongs to the beta-defensin family.

The protein localises to the secreted. Functionally, has antimicrobial activity against E.coli. Plays a role in the defense response in the male reproductive tract, contributing to sperm maturation, storage and protection. The protein is Sperm-associated antigen 11B of Mus musculus (Mouse).